The primary structure comprises 478 residues: uncharacterized protein (478 aa).

Residues 5–85 (KRIYVGGLSS…SKLRIEEARP (81 aa)) form the RRM domain. A phosphoserine mark is found at S207 and S308.

It is found in the nucleus. It localises to the nucleolus. This is an uncharacterized protein from Schizosaccharomyces pombe (strain 972 / ATCC 24843) (Fission yeast).